Here is a 433-residue protein sequence, read N- to C-terminus: Glutamate-1-semialdehyde 2,1-aminomutase (433 aa).

The residue at position 272 (K272) is an N6-(pyridoxal phosphate)lysine.

The protein belongs to the class-III pyridoxal-phosphate-dependent aminotransferase family. HemL subfamily. As to quaternary structure, homodimer. Pyridoxal 5'-phosphate serves as cofactor.

It localises to the cytoplasm. It catalyses the reaction (S)-4-amino-5-oxopentanoate = 5-aminolevulinate. The protein operates within porphyrin-containing compound metabolism; protoporphyrin-IX biosynthesis; 5-aminolevulinate from L-glutamyl-tRNA(Glu): step 2/2. It functions in the pathway porphyrin-containing compound metabolism; chlorophyll biosynthesis. This is Glutamate-1-semialdehyde 2,1-aminomutase from Synechococcus sp. (strain WH7803).